The primary structure comprises 318 residues: Nucleotide-binding protein Jann_0539 (318 aa).

17-24 (GPSGAGRS) contacts ATP. 64–67 (DPRT) provides a ligand contact to GTP. The tract at residues 278–318 (GWQVSKRHRDVDKDASENSDRDRGASARTAASTDDGEAEQP) is disordered. Over residues 286–302 (RDVDKDASENSDRDRGA) the composition is skewed to basic and acidic residues.

It belongs to the RapZ-like family.

Its function is as follows. Displays ATPase and GTPase activities. In Jannaschia sp. (strain CCS1), this protein is Nucleotide-binding protein Jann_0539.